The sequence spans 283 residues: Cyclin-C (283 aa).

In terms of domain architecture, Cyclin N-terminal spans 46–144 (NVIQALGEHL…ILECEFYLLE (99 aa)). The tract at residues 252-283 (TILSKMPKPKPPPNSEGEQGPNGSQNSSYSQS) is disordered. Residues 272 to 283 (PNGSQNSSYSQS) are compositionally biased toward polar residues. Phosphoserine is present on Ser275.

This sequence belongs to the cyclin family. Cyclin C subfamily. Component of the Mediator complex, which is composed of MED1, MED4, MED6, MED7, MED8, MED9, MED10, MED11, MED12, MED13, MED13L, MED14, MED15, MED16, MED17, MED18, MED19, MED20, MED21, MED22, MED23, MED24, MED25, MED26, MED27, MED29, MED30, MED31, CCNC, CDK8 and CDC2L6/CDK11. The MED12, MED13, CCNC and CDK8 subunits form a distinct module termed the CDK8 module. Mediator containing the CDK8 module is less active than Mediator lacking this module in supporting transcriptional activation. Individual preparations of the Mediator complex lacking one or more distinct subunits have been variously termed ARC, CRSP, DRIP, PC2, SMCC and TRAP. The cylin/CDK pair formed by CCNC/CDK8 also associates with the large subunit of RNA polymerase II. In terms of tissue distribution, highest levels in pancreas. High levels in heart, liver, skeletal muscle and kidney. Low levels in brain.

It is found in the nucleus. In terms of biological role, component of the Mediator complex, a coactivator involved in regulated gene transcription of nearly all RNA polymerase II-dependent genes. Mediator functions as a bridge to convey information from gene-specific regulatory proteins to the basal RNA polymerase II transcription machinery. Mediator is recruited to promoters by direct interactions with regulatory proteins and serves as a scaffold for the assembly of a functional preinitiation complex with RNA polymerase II and the general transcription factors. Binds to and activates cyclin-dependent kinase CDK8 that phosphorylates the CTD (C-terminal domain) of the large subunit of RNA polymerase II (RNAp II), which may inhibit the formation of a transcription initiation complex. The sequence is that of Cyclin-C (CCNC) from Homo sapiens (Human).